A 463-amino-acid chain; its full sequence is MAGAGERKGKKDDNGIGTAIDFVLSNARLVLGVGGAAMLGIATLAVKRMYDRAISAPTSPTRLSHSGKRSWEEPNWMGSPRLLNKDMKAGLSRSLQTLPTDSSAFDTDTFCPPRPKPLARRGQVDLKKSRLRMSLQEKLLSYYRNRAAIPAGEQARAKQAAVDICAELRSFLRAKLPDMPLRDMYLSGSLYDDLQVVTADHIQLIVPLVLEQNLWSCIPGEDTIMNVPGFFLVRRENPEYFPRGSSYWDRCVVGGYLSPKTVADTFEKVVAGSINWPAIGSLLDYVIRPAPPPEALTLEVQYEKDKHLVIDFLPSVTLGDTVLVARPHRLAQYDNLWRLSLRPAETARLRALDQADSGCRSLCLKILKAICKSTPALGHLTASQLTNVILHLAQEEADWSPDMLADRFLQALRGLISYLEAGVLPSALNPKVNLFAELTPQEIDELGYTLYCSLSEPEVLLQT.

Over 1-23 (MAGAGERKGKKDDNGIGTAIDFV) the chain is Mitochondrial intermembrane. The helical transmembrane segment at 24 to 46 (LSNARLVLGVGGAAMLGIATLAV) threads the bilayer. Residues 47 to 463 (KRMYDRAISA…LSEPEVLLQT (417 aa)) lie on the Cytoplasmic side of the membrane. Residues 49–195 (MYDRAISAPT…LSGSLYDDLQ (147 aa)) are dimerization. Residues Ser55, Ser59, Ser79, and Ser94 each carry the phosphoserine modification. Residues 57 to 77 (PTSPTRLSHSGKRSWEEPNWM) are disordered. The tract at residues 160-169 (AAVDICAELR) is important for interaction with DNM1L. ADP contacts are provided by Ser187, Ser189, and His201. The important for interaction with DNM1L stretch occupies residues 234 to 243 (RRENPEYFPR). The ADP site is built by Ser340, Arg342, and Lys368.

It belongs to the MID49/MID51 family. Homodimer. Interacts with DNM1L.

The protein resides in the mitochondrion outer membrane. In terms of biological role, mitochondrial outer membrane protein which regulates mitochondrial fission/fusion dynamics. Promotes the recruitment and association of the fission mediator dynamin-related protein 1 (DNM1L) to the mitochondrial surface independently of the mitochondrial fission FIS1 and MFF proteins. Regulates DNM1L GTPase activity and DNM1L oligomerization. Binds ADP and can also bind GDP, although with lower affinity. Does not bind CDP, UDP, ATP, AMP or GTP. Inhibits DNM1L GTPase activity in the absence of bound ADP. Requires ADP to stimulate DNM1L GTPase activity and the assembly of DNM1L into long, oligomeric tubules with a spiral pattern, as opposed to the ring-like DNM1L oligomers observed in the absence of bound ADP. Does not require ADP for its function in recruiting DNM1L. The polypeptide is Mitochondrial dynamics protein MID51 (Mief1) (Mus musculus (Mouse)).